A 238-amino-acid chain; its full sequence is uncharacterized protein (238 aa).

The segment covering 1–10 (MARGQNIRKR) has biased composition (basic residues). Disordered stretches follow at residues 1-26 (MARG…IGIH) and 195-238 (LNTS…YDSF).

The protein belongs to the asfivirus DP238L family.

This is an uncharacterized protein from Ornithodoros (relapsing fever ticks).